A 218-amino-acid polypeptide reads, in one-letter code: Thiopurine S-methyltransferase (218 aa).

S-adenosyl-L-methionine contacts are provided by tryptophan 10, leucine 45, glutamate 66, and arginine 123.

This sequence belongs to the class I-like SAM-binding methyltransferase superfamily. TPMT family.

The protein resides in the cytoplasm. The enzyme catalyses S-adenosyl-L-methionine + a thiopurine = S-adenosyl-L-homocysteine + a thiopurine S-methylether.. Its function is as follows. Involved in the biological cycling of tellurium and selenium. Tellurium resistance (Ter) mechanism. The sequence is that of Thiopurine S-methyltransferase from Pseudomonas syringae pv. pisi.